A 438-amino-acid polypeptide reads, in one-letter code: Enolase (438 aa).

The substrate site is built by histidine 159 and glutamate 168. The Proton donor role is filled by glutamate 211. Mg(2+)-binding residues include aspartate 246, glutamate 297, and aspartate 322. 2 residues coordinate substrate: glutamate 297 and aspartate 322. Lysine 347 serves as the catalytic Proton acceptor. Substrate is bound by residues 374–377 and lysine 398; that span reads SHRS.

It belongs to the enolase family. Homodimer. It depends on Mg(2+) as a cofactor.

It localises to the cytoplasm. It carries out the reaction (2R)-2-phosphoglycerate = phosphoenolpyruvate + H2O. Its pathway is carbohydrate degradation; glycolysis; pyruvate from D-glyceraldehyde 3-phosphate: step 4/5. This chain is Enolase (ENO1), found in Cryphonectria parasitica (Chestnut blight fungus).